The primary structure comprises 149 residues: Small ribosomal subunit protein bS6 (149 aa).

The segment at 93–149 (VGKHEEGPSAMMQKRDRDDRPRRDGDRPDRGGFGDRGPRPDRGDRDDRPRRPREDRA) is disordered. A compositionally biased stretch (basic and acidic residues) spans 94 to 149 (GKHEEGPSAMMQKRDRDDRPRRDGDRPDRGGFGDRGPRPDRGDRDDRPRRPREDRA).

Belongs to the bacterial ribosomal protein bS6 family.

Functionally, binds together with bS18 to 16S ribosomal RNA. The protein is Small ribosomal subunit protein bS6 of Rhizobium meliloti (strain 1021) (Ensifer meliloti).